We begin with the raw amino-acid sequence, 428 residues long: 3-phosphoshikimate 1-carboxyvinyltransferase (428 aa).

K19, S20, and R24 together coordinate 3-phosphoshikimate. A phosphoenolpyruvate-binding site is contributed by K19. Residues G91 and R119 each contribute to the phosphoenolpyruvate site. 4 residues coordinate 3-phosphoshikimate: S164, Q166, D312, and K339. Q166 lines the phosphoenolpyruvate pocket. The active-site Proton acceptor is the D312. 2 residues coordinate phosphoenolpyruvate: R343 and R386.

This sequence belongs to the EPSP synthase family. Monomer.

It is found in the cytoplasm. The enzyme catalyses 3-phosphoshikimate + phosphoenolpyruvate = 5-O-(1-carboxyvinyl)-3-phosphoshikimate + phosphate. Its pathway is metabolic intermediate biosynthesis; chorismate biosynthesis; chorismate from D-erythrose 4-phosphate and phosphoenolpyruvate: step 6/7. In terms of biological role, catalyzes the transfer of the enolpyruvyl moiety of phosphoenolpyruvate (PEP) to the 5-hydroxyl of shikimate-3-phosphate (S3P) to produce enolpyruvyl shikimate-3-phosphate and inorganic phosphate. The polypeptide is 3-phosphoshikimate 1-carboxyvinyltransferase (Bacillus subtilis (strain 168)).